We begin with the raw amino-acid sequence, 246 residues long: Protein-lysine N-methyltransferase EFM6 (246 aa).

Residues W51, 87–89, D115, W143, and A169 each bind S-adenosyl-L-methionine; that span reads GSG.

It belongs to the class I-like SAM-binding methyltransferase superfamily. METTL21 family. EFM6 subfamily.

The protein resides in the cytoplasm. Its function is as follows. S-adenosyl-L-methionine-dependent protein-lysine N-methyltransferase that methylates elongation factor 1-alpha (TEF1 and TEF2) at 'Lys-390'. This chain is Protein-lysine N-methyltransferase EFM6, found in Saccharomyces cerevisiae (strain ATCC 204508 / S288c) (Baker's yeast).